The sequence spans 144 residues: Maximins 9/H3 (144 aa).

An N-terminal signal peptide occupies residues 1 to 18; sequence MNFKYIVAVSFLIASAYA. A propeptide spanning residues 19-43 is cleaved from the precursor; it reads RSVKNDEQSLSQRDVLEEESLREIR. Tyr-70 bears the Tyrosine amide mark. The propeptide occupies 74–123; it reads TAEEHEVMKRLEAIMRDLDSLDHPEEASERETRGFNQDEIANLFTKKEKR. Ile-143 is subject to Isoleucine amide.

The protein belongs to the bombinin family. As to expression, expressed by the skin glands.

Its subcellular location is the secreted. Maximin-9 shows antimicrobial activity against bacteria and against the fungus C.albicans. It has little hemolytic activity. Functionally, maximin-H3 shows antibacterial activity against both Gram-positive and Gram-negative bacteria. It also shows antimicrobial activity against the fungus C.albicans. Shows strong hemolytic activity. In Bombina maxima (Giant fire-bellied toad), this protein is Maximins 9/H3.